We begin with the raw amino-acid sequence, 174 residues long: Protein COFACTOR ASSEMBLY OF COMPLEX C SUBUNIT B CCB3, chloroplastic (174 aa).

The transit peptide at methionine 1–valine 39 directs the protein to the chloroplast. The Lumenal segment spans residues serine 40–threonine 78. The chain crosses the membrane as a helical span at residues alanine 79–leucine 99. At arginine 100–tryptophan 147 the chain is on the stromal side. The chain crosses the membrane as a helical span at residues phenylalanine 148–valine 168. Over serine 169–asparagine 174 the chain is Lumenal.

Belongs to the YggT family.

It is found in the plastid. Its subcellular location is the chloroplast thylakoid membrane. Functionally, required for the biogenesis and accumulation of native cytochrome b6 in the thylakoid membrane. Controls the conversion of apocytochrome b6 to holocytochrome b6. Required for covalent binding of the c-type heme to cytochrome b6. This chain is Protein COFACTOR ASSEMBLY OF COMPLEX C SUBUNIT B CCB3, chloroplastic, found in Arabidopsis thaliana (Mouse-ear cress).